A 371-amino-acid polypeptide reads, in one-letter code: Polygalacturonase (371 aa).

Positions 1–19 are cleaved as a signal peptide; the sequence is MPSYLRNLVWATLAAGLVS. Positions 20–34 are excised as a propeptide; it reads AAPTPSRVSDLTKKS. Cysteine 38 and cysteine 53 form a disulfide bridge. PbH1 repeat units lie at residues 95-117, 165-195, 196-217, 218-238, 247-268, 276-298, and 310-355; these read GPLI…VINA, SDNL…DISE, STGV…AINS, GQNI…SIGS, VKNV…RIKT, VSDV…VIEQ, and TSGV…DITS. Aspartate 210 acts as the Proton donor in catalysis. Residues cysteine 212 and cysteine 228 are joined by a disulfide bond. Histidine 232 is an active-site residue. Asparagine 249 carries N-linked (GlcNAc...) asparagine glycosylation. Cystine bridges form between cysteine 338-cysteine 343 and cysteine 362-cysteine 371.

Belongs to the glycosyl hydrolase 28 family.

It localises to the secreted. It carries out the reaction (1,4-alpha-D-galacturonosyl)n+m + H2O = (1,4-alpha-D-galacturonosyl)n + (1,4-alpha-D-galacturonosyl)m.. In Penicillium janthinellum (Penicillium vitale), this protein is Polygalacturonase.